A 123-amino-acid chain; its full sequence is Large ribosomal subunit protein uL29 (123 aa).

Lys-19 is subject to N6-acetyllysine. A Glycyl lysine isopeptide (Lys-Gly) (interchain with G-Cter in SUMO2) cross-link involves residue Lys-25. Ser-29 is modified (phosphoserine). The residue at position 43 (Lys-43) is an N6-acetyllysine. Residues 85 to 123 (PKKTRAMRRRLNKHEESLKTKKQQRKERLYPLRKYAVKA) form a disordered region. Residues 86-96 (KKTRAMRRRLN) show a composition bias toward basic residues.

This sequence belongs to the universal ribosomal protein uL29 family. As to quaternary structure, component of the large ribosomal subunit.

The protein resides in the cytoplasm. Functionally, component of the large ribosomal subunit. The ribosome is a large ribonucleoprotein complex responsible for the synthesis of proteins in the cell. The protein is Large ribosomal subunit protein uL29 (RPL35) of Oryctolagus cuniculus (Rabbit).